The chain runs to 315 residues: Ribosomal protein L11 methyltransferase (315 aa).

The S-adenosyl-L-methionine site is built by Thr164, Gly185, Asp207, and Asn249.

The protein belongs to the methyltransferase superfamily. PrmA family.

It localises to the cytoplasm. It carries out the reaction L-lysyl-[protein] + 3 S-adenosyl-L-methionine = N(6),N(6),N(6)-trimethyl-L-lysyl-[protein] + 3 S-adenosyl-L-homocysteine + 3 H(+). Methylates ribosomal protein L11. This chain is Ribosomal protein L11 methyltransferase, found in Lactobacillus johnsonii (strain CNCM I-12250 / La1 / NCC 533).